A 621-amino-acid chain; its full sequence is Glutathione-regulated potassium-efflux system protein KefC (621 aa).

Transmembrane regions (helical) follow at residues 9 to 29, 30 to 50, 54 to 74, 90 to 110, 114 to 134, 149 to 169, 178 to 198, 232 to 252, 270 to 290, 296 to 316, 326 to 346, and 359 to 379; these read ALIY…LGLG, SVLG…RLVN, AILH…GLEL, GALQ…LLGL, VAEL…MQAM, FAVL…IPLL, LMAF…VVVL, LLLE…GVLL, GLLL…APWS, IVIL…LIAQ, RWFA…FGPA, and ALTL…VLLT. The 120-residue stretch at 399-518 folds into the RCK N-terminal domain; that stretch reads QPRVIVAGFG…AGVEAPERET (120 aa). The segment at 598–621 is disordered; it reads GWQGTEEGRHTGDIADEPENKPSA.

The protein belongs to the monovalent cation:proton antiporter 2 (CPA2) transporter (TC 2.A.37) family. KefC subfamily. Homodimer. Interacts with the regulatory subunit KefF.

The protein resides in the cell inner membrane. Pore-forming subunit of a potassium efflux system that confers protection against electrophiles. Catalyzes K(+)/H(+) antiport. This Klebsiella aerogenes (Enterobacter aerogenes) protein is Glutathione-regulated potassium-efflux system protein KefC.